The primary structure comprises 326 residues: Glyoxalase I (326 aa).

VOC domains are found at residues 22–167 (LLNH…LITY) and 182–322 (KFNH…VVPH). Histidine 25 is a Zn(2+) binding site. Position 29 (arginine 29) interacts with substrate. Residue glutamate 89 coordinates Zn(2+). Residues asparagine 93, arginine 113, histidine 117, and 147-148 (RQ) contribute to the substrate site. Histidine 117 serves as a coordination point for Zn(2+). Glutamate 163 provides a ligand contact to Zn(2+). Active-site proton donor/acceptor residues include glutamate 163 and glutamate 318.

It belongs to the glyoxalase I family. As to quaternary structure, monomer. Requires Zn(2+) as cofactor.

It carries out the reaction (R)-S-lactoylglutathione = methylglyoxal + glutathione. It functions in the pathway secondary metabolite metabolism; methylglyoxal degradation; (R)-lactate from methylglyoxal: step 1/2. Catalyzes the conversion of hemimercaptal, formed from methylglyoxal and glutathione, to S-lactoylglutathione. Can use gamma-glutamylcysteine as a substrate. This Saccharomyces cerevisiae (strain ATCC 204508 / S288c) (Baker's yeast) protein is Glyoxalase I.